Reading from the N-terminus, the 566-residue chain is MKKDYKKVFLKNTKEERIKENSNYLRGTIIDDLKDEITNGFTGDNFSLIRFHGMYQDDRDLRLERNEQKLEPRYAMMLRCRLPRGIIKAKKWLKIDHFASKNTLYGTIRLNNLQTFQFHGILKKTLKDAHKMLNKIGLDSLGTANDVNRNVLCTSNPMESLIHQQCYEWVSKISNFLLPQTKAYAEIWLNQKKIATTDQEPILGKTYLPRKFKTTVVVPPYNDVDLYANDMNFIAITKNNKIVGFNVLIGGGLSINHGNKNTWPFLAVELGYITLEKTLSVAESIVTTQRDWGNRTDRKNAKTRYTIAKVGLSVFKKEVEKRANMTFETIKPYYFISRGDRFGWTKNINNDWSLTVFIQNGRIYDNDKQLVKSGLLKIANLHTGNFRLTANQNIVISEILDKNKKKIEEIAISHGLIKKVSSLRENSMACVSFPTCPLAIAESERILSFFITKVENIMLKYGIEKEIIILRISGCPNGCGRSLLAEIGLIGKSLGRYNLYIGGNRIGSRIPKIYKENITEQEILIHLDFLIKIWSIERQKKEHFGDFVIRRNVVKKVVNPIYDFWN.

Positions 430, 436, 475, and 479 each coordinate [4Fe-4S] cluster. A siroheme-binding site is contributed by Cys-479.

Belongs to the nitrite and sulfite reductase 4Fe-4S domain family. Alpha(8)-beta(8). The alpha component is a flavoprotein, the beta component is a hemoprotein. The cofactor is siroheme. [4Fe-4S] cluster is required as a cofactor.

It carries out the reaction hydrogen sulfide + 3 NADP(+) + 3 H2O = sulfite + 3 NADPH + 4 H(+). It participates in sulfur metabolism; hydrogen sulfide biosynthesis; hydrogen sulfide from sulfite (NADPH route): step 1/1. Functionally, component of the sulfite reductase complex that catalyzes the 6-electron reduction of sulfite to sulfide. This is one of several activities required for the biosynthesis of L-cysteine from sulfate. The sequence is that of Putative sulfite reductase [NADPH] hemoprotein beta-component from Buchnera aphidicola subsp. Schizaphis graminum (strain Sg).